A 211-amino-acid chain; its full sequence is Large ribosomal subunit protein uL4 (211 aa).

The interval 63–94 (RFGRQKGGGTARHGARSAPQFVGGGKAHGPRV) is disordered.

It belongs to the universal ribosomal protein uL4 family. In terms of assembly, part of the 50S ribosomal subunit.

Functionally, one of the primary rRNA binding proteins, this protein initially binds near the 5'-end of the 23S rRNA. It is important during the early stages of 50S assembly. It makes multiple contacts with different domains of the 23S rRNA in the assembled 50S subunit and ribosome. Forms part of the polypeptide exit tunnel. This chain is Large ribosomal subunit protein uL4, found in Maricaulis maris (strain MCS10) (Caulobacter maris).